The following is a 299-amino-acid chain: Ribosomal protein L11 methyltransferase (299 aa).

S-adenosyl-L-methionine contacts are provided by Thr-144, Gly-165, Asp-187, and Asn-229.

Belongs to the methyltransferase superfamily. PrmA family.

It is found in the cytoplasm. The catalysed reaction is L-lysyl-[protein] + 3 S-adenosyl-L-methionine = N(6),N(6),N(6)-trimethyl-L-lysyl-[protein] + 3 S-adenosyl-L-homocysteine + 3 H(+). Functionally, methylates ribosomal protein L11. The polypeptide is Ribosomal protein L11 methyltransferase (Teredinibacter turnerae (strain ATCC 39867 / T7901)).